The following is a 329-amino-acid chain: Ribosomal RNA small subunit methyltransferase C (329 aa).

It belongs to the methyltransferase superfamily. RsmC family. Monomer.

The protein localises to the cytoplasm. The catalysed reaction is guanosine(1207) in 16S rRNA + S-adenosyl-L-methionine = N(2)-methylguanosine(1207) in 16S rRNA + S-adenosyl-L-homocysteine + H(+). Its function is as follows. Specifically methylates the guanine in position 1207 of 16S rRNA in the 30S particle. The polypeptide is Ribosomal RNA small subunit methyltransferase C (Haemophilus ducreyi (strain 35000HP / ATCC 700724)).